We begin with the raw amino-acid sequence, 688 residues long: UvrABC system protein C (688 aa).

Residues 11–90 (LTPGVYLYKD…IKKHRPRYNI (80 aa)) enclose the GIY-YIG domain. The UVR domain occupies 200–235 (GELVDALRTEMEAASQGLDFERAAVLRDRIRALERT).

Belongs to the UvrC family. As to quaternary structure, interacts with UvrB in an incision complex.

Its subcellular location is the cytoplasm. Its function is as follows. The UvrABC repair system catalyzes the recognition and processing of DNA lesions. UvrC both incises the 5' and 3' sides of the lesion. The N-terminal half is responsible for the 3' incision and the C-terminal half is responsible for the 5' incision. The protein is UvrABC system protein C of Nitratidesulfovibrio vulgaris (strain ATCC 29579 / DSM 644 / CCUG 34227 / NCIMB 8303 / VKM B-1760 / Hildenborough) (Desulfovibrio vulgaris).